The primary structure comprises 736 residues: Probable beta-glucosidase L (736 aa).

The N-terminal stretch at 1 to 21 (MNYRVPSLKATALAMAALTQA) is a signal peptide. N-linked (GlcNAc...) asparagine glycosylation is present at asparagine 224. The active site involves aspartate 252. N-linked (GlcNAc...) asparagine glycans are attached at residues asparagine 295, asparagine 363, asparagine 429, and asparagine 607.

The protein belongs to the glycosyl hydrolase 3 family.

Its subcellular location is the secreted. The enzyme catalyses Hydrolysis of terminal, non-reducing beta-D-glucosyl residues with release of beta-D-glucose.. The protein operates within glycan metabolism; cellulose degradation. Functionally, beta-glucosidases are one of a number of cellulolytic enzymes involved in the degradation of cellulosic biomass. Catalyzes the last step releasing glucose from the inhibitory cellobiose. The sequence is that of Probable beta-glucosidase L (bglL) from Aspergillus terreus (strain NIH 2624 / FGSC A1156).